A 494-amino-acid polypeptide reads, in one-letter code: mRNA decay activator protein ZFP36L2 (494 aa).

Ser57 bears the Phosphoserine mark. The tract at residues 93–113 (GGPTSYGTLKEPSGGGGTALL) is disordered. Residue Ser125 is modified to Phosphoserine. The RNA-binding motif lies at 153–158 (RYKTEL). C3H1-type zinc fingers lie at residues 153 to 181 (RYKT…HGFH) and 191 to 219 (KYKT…HNAD). The interval 170–211 (YGEKCQFAHGFHELRSLTRHPKYKTELCRTFHTIGFCPYGPR) is RNA-binding. Thr238 bears the Phosphothreonine mark. Disordered stretches follow at residues 257-293 (SLSF…PPSC) and 397-494 (QQQQ…ISDD). A compositionally biased stretch (pro residues) spans 406–415 (PAQPPAPPSA). 2 stretches are compositionally biased toward low complexity: residues 416 to 435 (TLPA…QLPR) and 459 to 478 (YLSG…PSLD). Ser490 and Ser492 each carry phosphoserine; by RPS6KA1.

As to quaternary structure, associates with the cytoplasmic CCR4-NOT deadenylase to trigger ARE-containing mRNA deadenylation and decay processes. Interacts with CNOT7; this interaction is inhibited in response to phorbol 12-myristate 13-acetate (PMA) treatment in a p38 MAPK-dependent manner. Interacts with CNOT6L. Phosphorylated by RPS6KA1 at Ser-490 and Ser-492 upon phorbol 12-myristate 13-acetate (PMA) treatment; this phosphorylation results in dissociation of the CCR4-NOT-deadenylase complex and induces p38 MAPK-mediated stabilization of the low-density lipoprotein (LDL) receptor (LDLR) mRNA. Phosphorylation occurs during early preadipocyte differentiation. Expressed mainly in the basal epidermal layer, weakly in the suprabasal epidermal layers. Expressed in epidermal keratinocytes (at protein level). Expressed in oocytes.

The protein localises to the nucleus. The protein resides in the cytoplasm. Zinc-finger RNA-binding protein that destabilizes several cytoplasmic AU-rich element (ARE)-containing mRNA transcripts by promoting their poly(A) tail removal or deadenylation, and hence provide a mechanism for attenuating protein synthesis. Acts as a 3'-untranslated region (UTR) ARE mRNA-binding adapter protein to communicate signaling events to the mRNA decay machinery. Functions by recruiting the CCR4-NOT deadenylase complex and probably other components of the cytoplasmic RNA decay machinery to the bound ARE-containing mRNAs, and hence promotes ARE-mediated mRNA deadenylation and decay processes. Binds to 3'-UTR ARE of numerous mRNAs. Promotes ARE-containing mRNA decay of the low-density lipoprotein (LDL) receptor (LDLR) mRNA in response to phorbol 12-myristate 13-acetate (PMA) treatment in a p38 MAPK-dependent manner. Positively regulates early adipogenesis by promoting ARE-mediated mRNA decay of immediate early genes (IEGs). Plays a role in mature peripheral neuron integrity by promoting ARE-containing mRNA decay of the transcriptional repressor REST mRNA. Plays a role in ovulation and oocyte meiotic maturation by promoting ARE-mediated mRNA decay of the luteinizing hormone receptor LHCGR mRNA. Acts as a negative regulator of erythroid cell differentiation: promotes glucocorticoid-induced self-renewal of erythroid cells by binding mRNAs that are induced or highly expressed during terminal erythroid differentiation and promotes their degradation, preventing erythroid cell differentiation. In association with ZFP36L1 maintains quiescence on developing B lymphocytes by promoting ARE-mediated decay of several mRNAs encoding cell cycle regulators that help B cells progress through the cell cycle, and hence ensuring accurate variable-diversity-joining (VDJ) recombination process and functional immune cell formation. Together with ZFP36L1 is also necessary for thymocyte development and prevention of T-cell acute lymphoblastic leukemia (T-ALL) transformation by promoting ARE-mediated mRNA decay of the oncogenic transcription factor NOTCH1 mRNA. In Homo sapiens (Human), this protein is mRNA decay activator protein ZFP36L2.